Here is a 222-residue protein sequence, read N- to C-terminus: Disulfide bond formation protein D (222 aa).

An N-terminal signal peptide occupies residues 1 to 36; the sequence is MKKKQQSSAKFAVILTVVVVVLLAAIVIINNKTEQG. The Thioredoxin domain maps to 37 to 220; that stretch reads NDAVSGQPSI…IKETIEKELK (184 aa). A disulfide bond links cysteine 69 and cysteine 72.

Belongs to the thioredoxin family. DsbA subfamily.

Its subcellular location is the cell membrane. It is found in the membrane raft. Required for the stabilization, possibly via formation of a disulfide bond, of the obligatory competence protein ComGC. May be required for the stability of secreted proteins with disulfide bonds. Not required for sporulation. This chain is Disulfide bond formation protein D (bdbD), found in Bacillus subtilis (strain 168).